Here is a 98-residue protein sequence, read N- to C-terminus: Acylphosphatase (98 aa).

The 87-residue stretch at 12 to 98 (TYYVRVRGVV…ERRFDRFQQQ (87 aa)) folds into the Acylphosphatase-like domain. Catalysis depends on residues Arg-27 and Asn-45.

The protein belongs to the acylphosphatase family.

It catalyses the reaction an acyl phosphate + H2O = a carboxylate + phosphate + H(+). This is Acylphosphatase (acyP) from Burkholderia ambifaria (strain ATCC BAA-244 / DSM 16087 / CCUG 44356 / LMG 19182 / AMMD) (Burkholderia cepacia (strain AMMD)).